Reading from the N-terminus, the 765-residue chain is Probable dipeptidyl peptidase 4 (765 aa).

The first 14 residues, 1–14 (MKWSILLLVGCAAA), serve as a signal peptide directing secretion. N-linked (GlcNAc...) asparagine glycosylation is found at N35, N78, N101, N110, N169, N218, N465, and N490. Catalysis depends on S613, which acts as the Charge relay system. N-linked (GlcNAc...) asparagine glycosylation occurs at N665. Residues D690 and H725 each act as charge relay system in the active site.

Belongs to the peptidase S9B family.

The protein localises to the secreted. The enzyme catalyses Release of an N-terminal dipeptide, Xaa-Yaa-|-Zaa-, from a polypeptide, preferentially when Yaa is Pro, provided Zaa is neither Pro nor hydroxyproline.. Its function is as follows. Extracellular dipeptidyl-peptidase which removes N-terminal dipeptides sequentially from polypeptides having unsubstituted N-termini provided that the penultimate residue is proline. Contributes to pathogenicity. This Aspergillus fumigatus (strain ATCC MYA-4609 / CBS 101355 / FGSC A1100 / Af293) (Neosartorya fumigata) protein is Probable dipeptidyl peptidase 4 (dpp4).